The following is a 190-amino-acid chain: Peptide deformylase (190 aa).

Fe cation-binding residues include cysteine 94 and histidine 136. Glutamate 137 is an active-site residue. Histidine 140 provides a ligand contact to Fe cation.

It belongs to the polypeptide deformylase family. The cofactor is Fe(2+).

The enzyme catalyses N-terminal N-formyl-L-methionyl-[peptide] + H2O = N-terminal L-methionyl-[peptide] + formate. Removes the formyl group from the N-terminal Met of newly synthesized proteins. Requires at least a dipeptide for an efficient rate of reaction. N-terminal L-methionine is a prerequisite for activity but the enzyme has broad specificity at other positions. This chain is Peptide deformylase, found in Chlorobium phaeovibrioides (strain DSM 265 / 1930) (Prosthecochloris vibrioformis (strain DSM 265)).